A 249-amino-acid chain; its full sequence is Probable hydroxyacylglutathione hydrolase ECU02_0580 (249 aa).

Positions 75, 77, 79, 80, 126, 144, and 183 each coordinate Zn(2+). Substrate contacts are provided by residues His183 to Tyr185 and Arg240 to Lys243.

The protein belongs to the metallo-beta-lactamase superfamily. Glyoxalase II family. Zn(2+) serves as cofactor.

The protein localises to the cytoplasm. Its subcellular location is the nucleus. The catalysed reaction is an S-(2-hydroxyacyl)glutathione + H2O = a 2-hydroxy carboxylate + glutathione + H(+). It functions in the pathway secondary metabolite metabolism; methylglyoxal degradation; (R)-lactate from methylglyoxal: step 2/2. In terms of biological role, thiolesterase that catalyzes the hydrolysis of S-D-lactoyl-glutathione to form glutathione and D-lactic acid. This is Probable hydroxyacylglutathione hydrolase ECU02_0580 from Encephalitozoon cuniculi (strain GB-M1) (Microsporidian parasite).